We begin with the raw amino-acid sequence, 364 residues long: Peroxisomal membrane protein PEX16 (364 aa).

Serine 200 carries the phosphoserine modification.

Belongs to the peroxin-16 family.

It is found in the peroxisome membrane. Involved in the biogenesis of peroxisomes. The sequence is that of Peroxisomal membrane protein PEX16 (pex16) from Schizosaccharomyces pombe (strain 972 / ATCC 24843) (Fission yeast).